The chain runs to 278 residues: Large ribosomal subunit protein uL2 (278 aa).

Residues 211–278 (KRWLGKRPQS…LIIRRRKGSK (68 aa)) form a disordered region. Residues 258–270 (KTRDTKKASEKLI) are compositionally biased toward basic and acidic residues.

It belongs to the universal ribosomal protein uL2 family. As to quaternary structure, part of the 50S ribosomal subunit. Forms a bridge to the 30S subunit in the 70S ribosome.

Its function is as follows. One of the primary rRNA binding proteins. Required for association of the 30S and 50S subunits to form the 70S ribosome, for tRNA binding and peptide bond formation. It has been suggested to have peptidyltransferase activity; this is somewhat controversial. Makes several contacts with the 16S rRNA in the 70S ribosome. The protein is Large ribosomal subunit protein uL2 of Lactobacillus helveticus (strain DPC 4571).